Here is a 407-residue protein sequence, read N- to C-terminus: Na(+)-translocating NADH-quinone reductase subunit F (407 aa).

A helical membrane pass occupies residues 3-23; it reads IILGVVMFTLIVLALVLVILF. Residues 32–126 enclose the 2Fe-2S ferredoxin-type domain; that stretch reads GDITISVNDD…DMDIELPEEI (95 aa). Positions 69, 75, 78, and 110 each coordinate [2Fe-2S] cluster. The FAD-binding FR-type domain maps to 129 to 269; it reads VKKWECTVIS…SGPFGEFFAK (141 aa). A catalytic region spans residues 272-389; it reads DAEMVFVGGG…PMMNAAVIGM (118 aa).

Belongs to the NqrF family. As to quaternary structure, composed of six subunits; NqrA, NqrB, NqrC, NqrD, NqrE and NqrF. It depends on [2Fe-2S] cluster as a cofactor. The cofactor is FAD.

Its subcellular location is the cell inner membrane. It catalyses the reaction a ubiquinone + n Na(+)(in) + NADH + H(+) = a ubiquinol + n Na(+)(out) + NAD(+). NQR complex catalyzes the reduction of ubiquinone-1 to ubiquinol by two successive reactions, coupled with the transport of Na(+) ions from the cytoplasm to the periplasm. The first step is catalyzed by NqrF, which accepts electrons from NADH and reduces ubiquinone-1 to ubisemiquinone by a one-electron transfer pathway. In Vibrio campbellii (strain ATCC BAA-1116), this protein is Na(+)-translocating NADH-quinone reductase subunit F.